A 382-amino-acid polypeptide reads, in one-letter code: MGCFGSPTSKQSDVNSEDSKSQKRRSDAISRQLQKDKQLYRATHRLLLLGAGESGKSTIVKQMRILHVDGFSETEKKQKIDDIKKNIRDAILTITGAMSTLNPPVALEKKENEPRVEYIQDYASSPDFNYPPEFYEHTEELWKDKGVLQTYERSNEYQLIDCAKYFLDRVSTIKNPNYTPNEQDILRCRVLTSGIFETRFQVDKVNFHMFDVGGQRDERRKWIQCFNDVTAIIFVTACSSYNMVLREDPTQNRLRESLDLFKSIWNNRWLRTISIILFLNKQDLLAEKIKAGKSKLSEYFSEFNKYQTPSDAIMESNDDPEVIRAKYFIRDEFLRISTASGDGKHYCYPHFTCAVDTENIKRVFNDCRDIIQRMHLRQYELL.

Polar residues predominate over residues 1–14 (MGCFGSPTSKQSDV). The segment at 1–31 (MGCFGSPTSKQSDVNSEDSKSQKRRSDAISR) is disordered. Residue G2 is the site of N-palmitoyl glycine attachment. Residue C3 is the site of S-palmitoyl cysteine attachment. The span at 17 to 31 (EDSKSQKRRSDAISR) shows a compositional bias: basic and acidic residues. The region spanning 42–382 (ATHRLLLLGA…RMHLRQYELL (341 aa)) is the G-alpha domain. The interval 45-58 (RLLLLGAGESGKST) is G1 motif. Residues 50 to 57 (GAGESGKS), 51 to 58 (AGESGKST), 186 to 192 (LRCRVLT), 211 to 215 (DVGGQ), 212 to 216 (VGGQR), 280 to 283 (NKQD), 281 to 284 (KQDL), and A354 each bind GTP. 2 residues coordinate Mg(2+): S57 and T192. Residues 184 to 192 (DILRCRVLT) are G2 motif. A G3 motif region spans residues 207-216 (FHMFDVGGQR). The segment at 276–283 (ILFLNKQD) is G4 motif. The G5 motif stretch occupies residues 352-357 (TCAVDT).

The protein belongs to the G-alpha family. G(s) subfamily. In terms of assembly, g proteins are composed of 3 units; alpha, beta and gamma. The alpha chain contains the guanine nucleotide binding site.

Its function is as follows. Guanine nucleotide-binding proteins (G proteins) are involved as modulators or transducers in various transmembrane signaling systems. The G(s) protein is involved in hormonal regulation of adenylate cyclase: it activates the cyclase. The chain is Guanine nucleotide-binding protein G(s) subunit alpha (G-salpha60A) from Drosophila pseudoobscura pseudoobscura (Fruit fly).